The sequence spans 479 residues: Kynurenine 3-monooxygenase (479 aa).

The protein belongs to the aromatic-ring hydroxylase family. KMO subfamily. FAD is required as a cofactor.

The protein localises to the mitochondrion outer membrane. It catalyses the reaction L-kynurenine + NADPH + O2 + H(+) = 3-hydroxy-L-kynurenine + NADP(+) + H2O. The protein operates within cofactor biosynthesis; NAD(+) biosynthesis; quinolinate from L-kynurenine: step 1/3. In terms of biological role, catalyzes the hydroxylation of L-kynurenine (L-Kyn) to form 3-hydroxy-L-kynurenine (L-3OHKyn). Required for synthesis of quinolinic acid. The protein is Kynurenine 3-monooxygenase of Chaetomium globosum (strain ATCC 6205 / CBS 148.51 / DSM 1962 / NBRC 6347 / NRRL 1970) (Soil fungus).